A 231-amino-acid chain; its full sequence is Elongation factor 1-delta 2 (231 aa).

At A2 the chain carries N-acetylalanine. The 63-residue stretch at 11-73 (SGLKKLDEHL…LRISGVSAEG (63 aa)) folds into the GST C-terminal domain. A disordered region spans residues 82-136 (SPITEEAVATPPAADSKDTAAEEEDDDDVDLFGEETEEEKKAAEERAASVKASTK). A compositionally biased stretch (acidic residues) spans 102–118 (AEEEDDDDVDLFGEETE). The span at 119-129 (EEKKAAEERAA) shows a compositional bias: basic and acidic residues.

It belongs to the EF-1-beta/EF-1-delta family. In terms of assembly, EF-1 is composed of 4 subunits: alpha, beta (1B-alpha=beta'), delta (1B-beta), and gamma (1B-gamma).

Its function is as follows. EF-1-beta and EF-1-delta stimulate the exchange of GDP bound to EF-1-alpha to GTP. The polypeptide is Elongation factor 1-delta 2 (Arabidopsis thaliana (Mouse-ear cress)).